Reading from the N-terminus, the 286-residue chain is Putative electron transfer flavoprotein subunit YgcQ (286 aa).

An FAD-binding site is contributed by 225–253 (VCIVVGASGAAALMAGVRNSKFVVAINHD).

This sequence belongs to the ETF alpha-subunit/FixB family. In terms of assembly, ygcQ and YgcR form a heterodimer.

May play a role in a redox process. This Escherichia coli (strain K12) protein is Putative electron transfer flavoprotein subunit YgcQ (ygcQ).